Consider the following 237-residue polypeptide: MISAQAYGENGKMKEYHYTGPVEHKFSPYAFNGGTVLAVAGEDFAIVASDTRLSEGYSIHSRDSPKCYKLTDTTVLGCSGFHGDCLTLTKIIEARLKMYKHSNNKSMTSGAIAAMLSTILYGRRFFPYYVYNIIGGLDEEGRGAVYSFDPVGSYQRDTYKAGGSASAMLQPLLDNQIGFKNMENVEHVPLTQEKAVQLVKDVFISAAERDVYTGDALKVCIVSKEGIKEEIVPLRKD.

The protein belongs to the peptidase T1B family. The 26S proteasome consists of a 20S proteasome core and two 19S regulatory subunits. The 20S proteasome core is a barrel-shaped complex made of 28 subunits that are arranged in four stacked rings. The two outer rings are each formed by seven alpha subunits, and the two inner rings are formed by seven beta subunits. The proteolytic activity is exerted by three beta-subunits psmb5, psmb6 and psmb7.

It localises to the cytoplasm. It is found in the nucleus. Functionally, non-catalytic component of the 20S core proteasome complex involved in the proteolytic degradation of most intracellular proteins. This complex plays numerous essential roles within the cell by associating with different regulatory particles. Associated with two 19S regulatory particles, forms the 26S proteasome and thus participates in the ATP-dependent degradation of ubiquitinated proteins. The 26S proteasome plays a key role in the maintenance of protein homeostasis by removing misfolded or damaged proteins that could impair cellular functions, and by removing proteins whose functions are no longer required. Associated with the PA200 or PA28, the 20S proteasome mediates ubiquitin-independent protein degradation. This is Proteasome subunit beta type-1 from Danio rerio (Zebrafish).